Reading from the N-terminus, the 565-residue chain is MNQTRVLLIFSWLTVATLLWMDWGKNKNETLEISASHNLGVDSHLELEHAVPQINAGAVPVQKDSQLIAAAPKVPVINVTTDVLQLKLDGFSILAADLLRFPQSKDRGAKPIKLLTDDPNYPYSATTGWVSQSNSPVPNLSTFLPEQSGVSYKLANDQDRLVVPFVWTAANGVSIRRTFTFERGRYAILIRDEIRNSGETPWNAYVFRKLSRVPIPNILNRAMTNPDSFSFNGAVWYSEKGGYERRAFKDYMNDGGLNREIGGGWIALLQHHFFTAWIPQKDQASLYLLAQNGSRDIAELRGPAFTVAPGQSTMTEARLWVGPKLVEQITKEHVKGLDRVVDYSRFQLMALIGQGLFWILSHLNSLLHNWGWAIVGLVVLLRIAMYPLSAAQYKSAAKMRKFQPRLQQLKERYGEDRQKFQQAMMELYKKEKINPMGGCFPILIQMPIFFALYWVLVESVELRQAPWLGWIQDLTTRDPYFILPLLNIVIMWATQKLTPTPAGMDPIAGKMMQVMPLIFGVMMAFVPSGLALYWVINGGLNLLIQWWMIHQYADFSRKRSRENIK.

Helical transmembrane passes span 6-26, 348-368, 370-390, 437-457, 479-499, and 516-536; these read VLLI…WGKN, LMAL…SLLH, WGWA…PLSA, GGCF…WVLV, PYFI…KLTP, and PLIF…YWVI.

The protein belongs to the OXA1/ALB3/YidC family. Type 1 subfamily. As to quaternary structure, interacts with the Sec translocase complex via SecD. Specifically interacts with transmembrane segments of nascent integral membrane proteins during membrane integration.

It is found in the cell inner membrane. In terms of biological role, required for the insertion and/or proper folding and/or complex formation of integral membrane proteins into the membrane. Involved in integration of membrane proteins that insert both dependently and independently of the Sec translocase complex, as well as at least some lipoproteins. Aids folding of multispanning membrane proteins. The polypeptide is Membrane protein insertase YidC (Xylella fastidiosa (strain M12)).